The primary structure comprises 80 residues: Cell division protein ZapB (80 aa).

Residues 3 to 80 (FEVFEKLEAK…ALLGKMEDVQ (78 aa)) are a coiled coil.

It belongs to the ZapB family. In terms of assembly, homodimer. The ends of the coiled-coil dimer bind to each other, forming polymers. Interacts with FtsZ.

It is found in the cytoplasm. Functionally, non-essential, abundant cell division factor that is required for proper Z-ring formation. It is recruited early to the divisome by direct interaction with FtsZ, stimulating Z-ring assembly and thereby promoting cell division earlier in the cell cycle. Its recruitment to the Z-ring requires functional FtsA or ZipA. In Photorhabdus laumondii subsp. laumondii (strain DSM 15139 / CIP 105565 / TT01) (Photorhabdus luminescens subsp. laumondii), this protein is Cell division protein ZapB.